The chain runs to 390 residues: DNA replication and repair protein RecF (390 aa).

30–37 (GDNAQGKS) contributes to the ATP binding site.

Belongs to the RecF family.

The protein resides in the cytoplasm. Its function is as follows. The RecF protein is involved in DNA metabolism; it is required for DNA replication and normal SOS inducibility. RecF binds preferentially to single-stranded, linear DNA. It also seems to bind ATP. The protein is DNA replication and repair protein RecF of Trichodesmium erythraeum (strain IMS101).